Consider the following 143-residue polypeptide: Large ribosomal subunit protein uL11 (143 aa).

The protein belongs to the universal ribosomal protein uL11 family. In terms of assembly, part of the ribosomal stalk of the 50S ribosomal subunit. Interacts with L10 and the large rRNA to form the base of the stalk. L10 forms an elongated spine to which L12 dimers bind in a sequential fashion forming a multimeric L10(L12)X complex. In terms of processing, one or more lysine residues are methylated.

Its function is as follows. Forms part of the ribosomal stalk which helps the ribosome interact with GTP-bound translation factors. The polypeptide is Large ribosomal subunit protein uL11 (Nitrosospira multiformis (strain ATCC 25196 / NCIMB 11849 / C 71)).